The primary structure comprises 406 residues: Gustatory receptor for sugar taste 64b (406 aa).

Residues methionine 1 to leucine 47 are Cytoplasmic-facing. Residues tyrosine 48 to isoleucine 68 traverse the membrane as a helical segment. Topologically, residues lysine 69–threonine 79 are extracellular. Residues leucine 80–tryptophan 100 form a helical membrane-spanning segment. At proline 101 to arginine 130 the chain is on the cytoplasmic side. A helical transmembrane segment spans residues isoleucine 131–glycine 151. The Extracellular portion of the chain corresponds to asparagine 152–tyrosine 183. Residue asparagine 167 is glycosylated (N-linked (GlcNAc...) asparagine). A helical transmembrane segment spans residues methionine 184–alanine 204. Topologically, residues tyrosine 205–alanine 265 are cytoplasmic. The chain crosses the membrane as a helical span at residues isoleucine 266–phenylalanine 286. Residues asparagine 287–lysine 290 lie on the Extracellular side of the membrane. A helical membrane pass occupies residues asparagine 291–valine 311. Topologically, residues arginine 312–arginine 370 are cytoplasmic. The helical transmembrane segment at serine 371–isoleucine 391 threads the bilayer. At asparagine 392 to tyrosine 406 the chain is on the extracellular side.

This sequence belongs to the insect chemoreceptor superfamily. Gustatory receptor (GR) family. Gr5a subfamily. As to expression, expressed in Gr5a-expressing sugar-sensing cells.

It localises to the cell membrane. Its function is as follows. One of the few identified sugar gustatory receptors identified so far and which promotes the starvation-induced increase of feeding motivation. In Drosophila melanogaster (Fruit fly), this protein is Gustatory receptor for sugar taste 64b (Gr64b).